The chain runs to 207 residues: Putative 3-methyladenine DNA glycosylase (207 aa).

It belongs to the DNA glycosylase MPG family.

This is Putative 3-methyladenine DNA glycosylase from Listeria monocytogenes serovar 1/2a (strain ATCC BAA-679 / EGD-e).